A 186-amino-acid polypeptide reads, in one-letter code: Peptide deformylase (186 aa).

Positions 113 and 156 each coordinate Fe cation. The active site involves glutamate 157. Histidine 160 lines the Fe cation pocket.

This sequence belongs to the polypeptide deformylase family. Fe(2+) serves as cofactor.

It catalyses the reaction N-terminal N-formyl-L-methionyl-[peptide] + H2O = N-terminal L-methionyl-[peptide] + formate. Its function is as follows. Removes the formyl group from the N-terminal Met of newly synthesized proteins. Requires at least a dipeptide for an efficient rate of reaction. N-terminal L-methionine is a prerequisite for activity but the enzyme has broad specificity at other positions. In Levilactobacillus brevis (strain ATCC 367 / BCRC 12310 / CIP 105137 / JCM 1170 / LMG 11437 / NCIMB 947 / NCTC 947) (Lactobacillus brevis), this protein is Peptide deformylase.